The chain runs to 153 residues: NADPH-dependent 7-cyano-7-deazaguanine reductase (153 aa).

Catalysis depends on C51, which acts as the Thioimide intermediate. D58 acts as the Proton donor in catalysis. Residues 73-75 and 92-93 each bind substrate; these read VES and HE.

Belongs to the GTP cyclohydrolase I family. QueF type 1 subfamily.

It localises to the cytoplasm. It catalyses the reaction 7-aminomethyl-7-carbaguanine + 2 NADP(+) = 7-cyano-7-deazaguanine + 2 NADPH + 3 H(+). The protein operates within tRNA modification; tRNA-queuosine biosynthesis. Functionally, catalyzes the NADPH-dependent reduction of 7-cyano-7-deazaguanine (preQ0) to 7-aminomethyl-7-deazaguanine (preQ1). The polypeptide is NADPH-dependent 7-cyano-7-deazaguanine reductase (Granulibacter bethesdensis (strain ATCC BAA-1260 / CGDNIH1)).